We begin with the raw amino-acid sequence, 104 residues long: Urease subunit beta (104 aa).

It belongs to the urease beta subunit family. Heterotrimer of UreA (gamma), UreB (beta) and UreC (alpha) subunits. Three heterotrimers associate to form the active enzyme.

It is found in the cytoplasm. It catalyses the reaction urea + 2 H2O + H(+) = hydrogencarbonate + 2 NH4(+). It functions in the pathway nitrogen metabolism; urea degradation; CO(2) and NH(3) from urea (urease route): step 1/1. The polypeptide is Urease subunit beta (Rhodococcus opacus (strain B4)).